The chain runs to 571 residues: Dihydroxy-acid dehydratase (571 aa).

C56 serves as a coordination point for [2Fe-2S] cluster. Position 88 (D88) interacts with Mg(2+). Residue C129 participates in [2Fe-2S] cluster binding. Positions 130 and 131 each coordinate Mg(2+). K131 is subject to N6-carboxylysine. C201 is a [2Fe-2S] cluster binding site. Mg(2+) is bound at residue E452. The Proton acceptor role is filled by S478.

It belongs to the IlvD/Edd family. As to quaternary structure, homodimer. Requires [2Fe-2S] cluster as cofactor. The cofactor is Mg(2+).

It carries out the reaction (2R)-2,3-dihydroxy-3-methylbutanoate = 3-methyl-2-oxobutanoate + H2O. The enzyme catalyses (2R,3R)-2,3-dihydroxy-3-methylpentanoate = (S)-3-methyl-2-oxopentanoate + H2O. It participates in amino-acid biosynthesis; L-isoleucine biosynthesis; L-isoleucine from 2-oxobutanoate: step 3/4. The protein operates within amino-acid biosynthesis; L-valine biosynthesis; L-valine from pyruvate: step 3/4. Functions in the biosynthesis of branched-chain amino acids. Catalyzes the dehydration of (2R,3R)-2,3-dihydroxy-3-methylpentanoate (2,3-dihydroxy-3-methylvalerate) into 2-oxo-3-methylpentanoate (2-oxo-3-methylvalerate) and of (2R)-2,3-dihydroxy-3-methylbutanoate (2,3-dihydroxyisovalerate) into 2-oxo-3-methylbutanoate (2-oxoisovalerate), the penultimate precursor to L-isoleucine and L-valine, respectively. The protein is Dihydroxy-acid dehydratase of Streptococcus suis (strain 98HAH33).